Reading from the N-terminus, the 551-residue chain is Cytochrome c oxidase subunit 1 homolog (551 aa).

3 helical membrane passes run 14-34 (GELG…VVAA), 40-60 (EYAF…FVIG), and 88-108 (VGTL…VIIA). Residue His-132 participates in heme b binding. Helical transmembrane passes span 133–153 (TSAV…FYVV), 169–189 (FVVL…LLGI), 202–222 (ADLW…GTVL), 229–249 (IYVA…LHLG), 280–300 (GHNA…YYFI), 313–333 (LSIV…PHHL), 345–365 (LGMT…INGL), and 383–403 (MMVV…MMSV). 3 residues coordinate Cu cation: His-281, His-331, and His-332. Heme b-binding residues include His-419 and His-421. Helical transmembrane passes span 424–444 (ALGW…PWLW), 459–479 (FWVS…AGIL), and 513–533 (IGGI…FMTI).

Belongs to the heme-copper respiratory oxidase family. It depends on Cu(2+) as a cofactor. The cofactor is heme b.

The protein resides in the cell membrane. The enzyme catalyses 4 Fe(II)-[cytochrome c] + O2 + 8 H(+)(in) = 4 Fe(III)-[cytochrome c] + 2 H2O + 4 H(+)(out). It functions in the pathway energy metabolism; oxidative phosphorylation. Its function is as follows. Cytochrome c oxidase is the component of the respiratory chain that catalyzes the reduction of oxygen to water. Subunits 1-3 form the functional core of the enzyme complex. Co I is the catalytic subunit of the enzyme. Electrons originating in cytochrome c or a quinol are transferred to the bimetallic center formed by a high-spin heme and copper B. This is Cytochrome c oxidase subunit 1 homolog (fixN) from Azorhizobium caulinodans (strain ATCC 43989 / DSM 5975 / JCM 20966 / LMG 6465 / NBRC 14845 / NCIMB 13405 / ORS 571).